We begin with the raw amino-acid sequence, 112 residues long: uncharacterized protein (112 aa).

N-linked (GlcNAc...) asparagine; by host glycans are attached at residues N29 and N60. Residues 66–86 (IFNGLGFILIVIFIYLLLITL) form a helical membrane-spanning segment.

Belongs to the asfivirus B117L family.

It is found in the host membrane. The protein localises to the virion. This is an uncharacterized protein from Ornithodoros (relapsing fever ticks).